The primary structure comprises 524 residues: Cytochrome P450 4F1 (524 aa).

A helical transmembrane segment spans residues Val-15 to Leu-35. Residues Glu-328 and Cys-468 each coordinate heme.

Belongs to the cytochrome P450 family. Heme serves as cofactor. Expressed in liver.

The protein resides in the endoplasmic reticulum membrane. Its subcellular location is the microsome membrane. It catalyses the reaction (5Z,8Z,11Z,14Z)-eicosatetraenoate + reduced [NADPH--hemoprotein reductase] + O2 = 20-hydroxy-(5Z,8Z,11Z,14Z)-eicosatetraenoate + oxidized [NADPH--hemoprotein reductase] + H2O + H(+). The enzyme catalyses 5-hydroxy-(6E,8Z,11Z,14Z)-eicosatetraenoate + reduced [NADPH--hemoprotein reductase] + O2 = 5,20-dihydroxy-(6E,8Z,11Z,14Z)-eicosatetraenoate + oxidized [NADPH--hemoprotein reductase] + H2O + H(+). It carries out the reaction 8-hydroxy-(5Z,9E,11Z,14Z)-eicosatetraenoate + reduced [NADPH--hemoprotein reductase] + O2 = 8,20-dihydroxy-(5Z,9E,11Z,14Z)-eicosatetraenoate + oxidized [NADPH--hemoprotein reductase] + H2O + H(+). The catalysed reaction is leukotriene B4 + reduced [NADPH--hemoprotein reductase] + O2 = 20-hydroxy-leukotriene B4 + oxidized [NADPH--hemoprotein reductase] + H2O + H(+). It catalyses the reaction 6-trans-leukotriene B4 + reduced [NADPH--hemoprotein reductase] + O2 = 20-hydroxy-6-trans-leukotriene B4 + oxidized [NADPH--hemoprotein reductase] + H2O + H(+). The enzyme catalyses lipoxin A4 + reduced [NADPH--hemoprotein reductase] + O2 = 20-hydroxy-lipoxin A4 + oxidized [NADPH--hemoprotein reductase] + H2O + H(+). Its function is as follows. A cytochrome P450 monooxygenase involved in the metabolism of arachidonic acid and its oxygenated derivatives. Mechanistically, uses molecular oxygen inserting one oxygen atom into a substrate, and reducing the second into a water molecule, with two electrons provided by NADPH via cytochrome P450 reductase (CPR; NADPH-ferrihemoprotein reductase). Participates in the conversion of arachidonic acid to omega-hydroxyeicosatetraenoic acid (20-HETE), a signaling molecule acting both as vasoconstrictive and natriuretic with overall effect on arterial blood pressure. May play a role in the oxidative inactivation of eicosanoids, including both pro-inflammatory and anti-inflammatory mediators such as leukotriene B4 (LTB4), lipoxin A4 (LXA4), and several HETEs. The polypeptide is Cytochrome P450 4F1 (Rattus norvegicus (Rat)).